Reading from the N-terminus, the 478-residue chain is Dynein regulatory complex subunit 4 (478 aa).

Residues 1-12 (MAPKKKGKKGKA) show a composition bias toward basic residues. The segment at 1–33 (MAPKKKGKKGKAKGTPIVDGLAPEDMSKEQVEE) is disordered. A regulates microtubule-binding region spans residues 1-114 (MAPKKKGKKG…LLYEHQNNLT (114 aa)). The interval 115 to 258 (EMKAEGTVVM…NSLKEQMEDM (144 aa)) is microtubule-binding. The stretch at 242–427 (LNNLALINSL…KDLQYELAQV (186 aa)) forms a coiled coil. Positions 357 to 478 (QQKTGFKNLV…GPAGLVGTPT (122 aa)) are interaction with SMO.

It belongs to the DRC4 family. Component of the nexin-dynein regulatory complex (N-DRC). Interacts with microtubules. Interacts with SMO. Interacts (via coiled-coil domains) with RAB3B (in GTP-bound form). Interacts with DRC1. Interacts with DRC7. As to expression, expressed in respiratory epithelial cells (at protein level). Expressed in the heart, skeletal muscle, pancreas, liver, brain, trachea and lung. Weakly or not expressed in placenta and kidney.

It is found in the cytoplasm. The protein localises to the cytoskeleton. It localises to the cell projection. The protein resides in the cilium. Its subcellular location is the flagellum. It is found in the cilium axoneme. The protein localises to the cilium basal body. It localises to the golgi apparatus. The protein resides in the flagellum axoneme. Functionally, component of the nexin-dynein regulatory complex (N-DRC), a key regulator of ciliary/flagellar motility which maintains the alignment and integrity of the distal axoneme and regulates microtubule sliding in motile axonemes. Plays an important role in the assembly of the N-DRC linker. Plays dual roles at both the primary (or non-motile) cilia to regulate hedgehog signaling and in motile cilia to coordinate cilia movement. Required for proper motile cilia functioning. Positively regulates ciliary smoothened (SMO)-dependent Hedgehog (Hh) signaling pathway by facilitating the trafficking of SMO into the cilium and the stimulation of SMO activity in a GRK2-dependent manner. In Homo sapiens (Human), this protein is Dynein regulatory complex subunit 4 (GAS8).